A 304-amino-acid polypeptide reads, in one-letter code: uncharacterized protein (304 aa).

Transmembrane regions (helical) follow at residues 5–25 (TIIL…FIAI), 42–62 (FLLA…PLLF), 68–88 (IFQL…ILYG), 96–116 (IASV…FIFF), 120–140 (LYFF…IILF), 150–170 (TIKG…IYLY), 178–198 (ISIL…FLVI), 215–235 (ILAT…SYFY), 245–265 (ASTI…FVWG), and 268–288 (IGID…ITIF). EamA domains are found at residues 16 to 140 (ITWG…IILF) and 162 to 288 (TSHA…ITIF).

It belongs to the EamA transporter family.

Its subcellular location is the cell membrane. This is an uncharacterized protein from Buchnera aphidicola subsp. Schlechtendalia chinensis.